Here is a 152-residue protein sequence, read N- to C-terminus: Troponin C (152 aa).

Thr1 bears the N-acetylthreonine mark. 4 EF-hand domains span residues 9-44, 45-80, 82-117, and 118-152; these read KQIL…LGLL, VKDD…KLKE, LDER…LGDE, and LTEE…SSDA. 5 residues coordinate Ca(2+): Asp131, Asp133, Ser135, Thr137, and Glu142.

It belongs to the troponin C family.

Functionally, troponin is the central regulatory protein of striated muscle contraction. Tn consists of three components: Tn-I which is the inhibitor of actomyosin ATPase, Tn-T which contains the binding site for tropomyosin and Tn-C. The binding of calcium to Tn-C abolishes the inhibitory action of Tn on actin filaments. The chain is Troponin C from Mizuhopecten yessoensis (Japanese scallop).